The primary structure comprises 254 residues: Probable glutathione transferase omega-2 (254 aa).

The GST N-terminal domain maps to 25–105 (GTIRIYNMRY…YLDDIYPEPR (81 aa)). Cys-35 serves as the catalytic Nucleophile. Residues Lys-62, Val-75, and 89 to 90 (ES) each bind glutathione. Positions 110-239 (DHYEKVQQKL…SQPTETAVEF (130 aa)) constitute a GST C-terminal domain.

It belongs to the GST superfamily. Omega family.

It catalyses the reaction RX + glutathione = an S-substituted glutathione + a halide anion + H(+). The enzyme catalyses L-dehydroascorbate + 2 glutathione = glutathione disulfide + L-ascorbate. The catalysed reaction is methylarsonate + 2 glutathione + H(+) = methylarsonous acid + glutathione disulfide + H2O. Functionally, exhibits glutathione-dependent thiol transferase activity. Has dehydroascorbate reductase activity and may contribute to the recycling of ascorbic acid. Participates in the biotransformation of inorganic arsenic and reduces monomethylarsonic acid (MMA). The chain is Probable glutathione transferase omega-2 (gsto-2) from Caenorhabditis elegans.